The following is a 311-amino-acid chain: MQSKNMIVASSHQQQQQQQPQQPQPQLKCPRCDSSNTKFCYYNNYSLSQPRHFCKACKRYWTRGGTLRNVPVGGSYRKNKRVKRPSTATTTTASTVSTTNSSSPNNPHQISHFSSMNHHPLFYGLSDHMSSCNNNLPMIPSRFSDSSKTCSSSGLESEFLSSGFSSLSALGLGLPHQMSHDHTINGSFINNSTTNKPFLLSGLFGSSMSSSSTLLQHPHKPMNNGGDMLGQSHLQTLASLQDLHVGGNNEDMKYKEGKLDQISGNINGFMSSSSSLDPSNYNNMWNNASVVNGAWLDPTNNNVGSSLTSLI.

The segment covering 1–12 (MQSKNMIVASSH) has biased composition (polar residues). Residues 1 to 29 (MQSKNMIVASSHQQQQQQQPQQPQPQLKC) are disordered. The span at 13–26 (QQQQQQQPQQPQPQ) shows a compositional bias: low complexity. A Dof-type zinc finger spans residues 27-81 (LKCPRCDSSNTKFCYYNNYSLSQPRHFCKACKRYWTRGGTLRNVPVGGSYRKNKR). Zn(2+)-binding residues include cysteine 29, cysteine 32, cysteine 54, and cysteine 57. Positions 72-110 (VGGSYRKNKRVKRPSTATTTTASTVSTTNSSSPNNPHQI) are disordered. The segment covering 85 to 107 (PSTATTTTASTVSTTNSSSPNNP) has biased composition (low complexity).

It localises to the nucleus. Transcription factor that binds specifically to a 5'-AA[AG]G-3' consensus core sequence. The protein is Dof zinc finger protein DOF1.4 (DOF1.4) of Arabidopsis thaliana (Mouse-ear cress).